The chain runs to 137 residues: Ribosome-binding factor A (137 aa).

The protein belongs to the RbfA family. In terms of assembly, monomer. Binds 30S ribosomal subunits, but not 50S ribosomal subunits or 70S ribosomes.

The protein localises to the cytoplasm. Functionally, one of several proteins that assist in the late maturation steps of the functional core of the 30S ribosomal subunit. Associates with free 30S ribosomal subunits (but not with 30S subunits that are part of 70S ribosomes or polysomes). Required for efficient processing of 16S rRNA. May interact with the 5'-terminal helix region of 16S rRNA. This chain is Ribosome-binding factor A, found in Cereibacter sphaeroides (strain ATCC 17029 / ATH 2.4.9) (Rhodobacter sphaeroides).